The chain runs to 279 residues: Thymidylate synthase (279 aa).

141–142 (RR) contributes to the dUMP binding site. Residue C161 is the Nucleophile of the active site. DUMP contacts are provided by residues 181–184 (RSND), N192, and 222–224 (HVY). D184 contributes to the (6R)-5,10-methylene-5,6,7,8-tetrahydrofolate binding site. A (6R)-5,10-methylene-5,6,7,8-tetrahydrofolate-binding site is contributed by A278.

The protein belongs to the thymidylate synthase family. In terms of assembly, homodimer.

The catalysed reaction is dUMP + (6R)-5,10-methylene-5,6,7,8-tetrahydrofolate = 7,8-dihydrofolate + dTMP. The protein operates within pyrimidine metabolism; dTTP biosynthesis. Its function is as follows. Provides the sole de novo source of dTMP for DNA biosynthesis. The sequence is that of Thymidylate synthase (thyP3) from Bacillus subtilis (Bacteriophage phi-3T).